Here is a 333-residue protein sequence, read N- to C-terminus: CMP-N-acetylneuraminate-beta-galactosamide-alpha-2,3-sialyltransferase 4 (333 aa).

The Cytoplasmic portion of the chain corresponds to 1–8 (MTSKSHWK). A helical; Signal-anchor for type II membrane protein membrane pass occupies residues 9-26 (LLALALVLVVVMVWYSIS). At 27–333 (REDRYIEFFY…MGAVKNLTYF (307 aa)) the chain is on the lumenal side. N-linked (GlcNAc...) asparagine glycans are attached at residues Asn61, Asn131, Asn310, and Asn329. Cys120 and Cys273 form a disulfide bridge.

Belongs to the glycosyltransferase 29 family.

The protein localises to the golgi apparatus. It localises to the golgi stack membrane. The enzyme catalyses a beta-D-galactosyl-(1-&gt;3)-N-acetyl-beta-D-galactosaminyl derivative + CMP-N-acetyl-beta-neuraminate = an N-acetyl-alpha-neuraminyl-(2-&gt;3)-beta-D-galactosyl-(1-&gt;3)-N-acetyl-beta-D-galactosaminyl derivative + CMP + H(+). It carries out the reaction a beta-D-galactosyl-(1-&gt;3)-N-acetyl-alpha-D-galactosaminyl derivative + CMP-N-acetyl-beta-neuraminate = an N-acetyl-alpha-neuraminyl-(2-&gt;3)-beta-D-galactosyl-(1-&gt;3)-N-acetyl-alpha-D-galactosaminyl derivative + CMP + H(+). The catalysed reaction is a beta-D-galactosyl-(1-&gt;4)-N-acetyl-beta-D-glucosaminyl derivative + CMP-N-acetyl-beta-neuraminate = an N-acetyl-alpha-neuraminyl-(2-&gt;3)-beta-D-galactosyl-(1-&gt;4)-N-acetyl-beta-D-glucosaminyl derivative + CMP + H(+). It catalyses the reaction a ganglioside GM1 (d18:1(4E)) + CMP-N-acetyl-beta-neuraminate = a ganglioside GD1a (d18:1(4E)) + CMP + H(+). The enzyme catalyses a ganglioside GA1 (d18:1(4E)) + CMP-N-acetyl-beta-neuraminate = a ganglioside GM1b (d18:1(4E)) + CMP + H(+). It carries out the reaction a ganglioside GT1c (d18:1(4E)) + CMP-N-acetyl-beta-neuraminate = a ganglioside GQ1c (d18:1(4E)) + CMP + H(+). The catalysed reaction is a neolactoside nLc4Cer + CMP-N-acetyl-beta-neuraminate = a neolactoside IV(3)-alpha-NeuAc-nLc4Cer + CMP + H(+). It catalyses the reaction a neolactoside nLc4Cer(d18:1(4E)) + CMP-N-acetyl-beta-neuraminate = a neolactoside IV(3)-alpha-NeuAc-nLc4Cer(d18:1(4E)) + CMP + H(+). It participates in protein modification; protein glycosylation. It functions in the pathway glycolipid biosynthesis. A beta-galactoside alpha2-3 sialyltransferase involved in terminal sialylation of glycoproteins and glycolipids. Catalyzes the transfer of sialic acid (N-acetyl-neuraminic acid; Neu5Ac) from the nucleotide sugar donor CMP-Neu5Ac onto acceptor Galbeta-(1-&gt;3)-GalNAc- and Galbeta-(1-&gt;4)-GlcNAc-terminated glycoconjugates through an alpha2-3 linkage. Plays a major role in hemostasis. Responsible for sialylation of plasma VWF/von Willebrand factor, preventing its recognition by asialoglycoprotein receptors (ASGPR) and subsequent clearance. Regulates ASGPR-mediated clearance of platelets. Participates in the biosynthesis of the sialyl Lewis X epitopes, both on O- and N-glycans, which are recognized by SELE/E-selectin, SELP/P-selectin and SELL/L-selectin. Essential for selectin-mediated rolling and adhesion of leukocytes during extravasation. Contributes to adhesion and transendothelial migration of neutrophils likely through terminal sialylation of CXCR2. In glycosphingolipid biosynthesis, sialylates GM1 and GA1 gangliosides to form GD1a and GM1b, respectively. Metabolizes brain c-series ganglioside GT1c forming GQ1c. Synthesizes ganglioside LM1 (IV3Neu5Ac-nLc4Cer), a major structural component of peripheral nerve myelin. In Rattus norvegicus (Rat), this protein is CMP-N-acetylneuraminate-beta-galactosamide-alpha-2,3-sialyltransferase 4 (St3gal4).